The primary structure comprises 872 residues: Alanine--tRNA ligase (872 aa).

Zn(2+)-binding residues include histidine 567, histidine 571, cysteine 669, and histidine 673.

It belongs to the class-II aminoacyl-tRNA synthetase family. It depends on Zn(2+) as a cofactor.

Its subcellular location is the cytoplasm. The catalysed reaction is tRNA(Ala) + L-alanine + ATP = L-alanyl-tRNA(Ala) + AMP + diphosphate. Functionally, catalyzes the attachment of alanine to tRNA(Ala) in a two-step reaction: alanine is first activated by ATP to form Ala-AMP and then transferred to the acceptor end of tRNA(Ala). Also edits incorrectly charged Ser-tRNA(Ala) and Gly-tRNA(Ala) via its editing domain. The polypeptide is Alanine--tRNA ligase (Streptococcus pyogenes serotype M18 (strain MGAS8232)).